Reading from the N-terminus, the 217-residue chain is ATP phosphoribosyltransferase (217 aa).

Belongs to the ATP phosphoribosyltransferase family. Short subfamily. Heteromultimer composed of HisG and HisZ subunits.

It localises to the cytoplasm. The enzyme catalyses 1-(5-phospho-beta-D-ribosyl)-ATP + diphosphate = 5-phospho-alpha-D-ribose 1-diphosphate + ATP. Its pathway is amino-acid biosynthesis; L-histidine biosynthesis; L-histidine from 5-phospho-alpha-D-ribose 1-diphosphate: step 1/9. Its function is as follows. Catalyzes the condensation of ATP and 5-phosphoribose 1-diphosphate to form N'-(5'-phosphoribosyl)-ATP (PR-ATP). Has a crucial role in the pathway because the rate of histidine biosynthesis seems to be controlled primarily by regulation of HisG enzymatic activity. The sequence is that of ATP phosphoribosyltransferase from Polaromonas naphthalenivorans (strain CJ2).